We begin with the raw amino-acid sequence, 258 residues long: 2S seed storage albumin protein (258 aa).

The signal sequence occupies residues Met1 to Ala24. Residues Tyr25–Asp35 constitute a propeptide that is removed on maturation. Intrachain disulfides connect Cys49–Cys108, Cys61–Cys97, Cys98–Cys145, and Cys110–Cys149. A disordered region spans residues Tyr64–Gln87. Residue Ser69 is modified to Phosphoserine. The span at Ser73–Gly83 shows a compositional bias: basic and acidic residues. Positions Glu77–Asn86 are excised as a propeptide. Position 87 is a pyrrolidone carboxylic acid (Gln87). Propeptides lie at residues Arg154–Asn156 and Ser191–Asn193. 4 disulfide bridges follow: Cys162–Cys212, Cys175–Cys201, Cys202–Cys249, and Cys214–Cys256. Pyrrolidone carboxylic acid is present on Gln194.

This sequence belongs to the 2S seed storage albumins family. As to quaternary structure, the 2 mature proteins consist of heterodimers of a small and a large chain; disulfide-linked. The N-terminus of both large chains is blocked. Post-translationally, the C-terminus of the allergen Ric c 1 and allergen Ric c 3 small chains are heterogeneous and the length of the chains can vary from 33 to 36 amino acids and from 36 to 40 amino acids respectively.

In terms of biological role, 2S seed storage proteins. The polypeptide is 2S seed storage albumin protein (Ricinus communis (Castor bean)).